Reading from the N-terminus, the 156-residue chain is 3-hydroxyacyl-[acyl-carrier-protein] dehydratase FabZ (156 aa).

His-57 is a catalytic residue.

The protein belongs to the thioester dehydratase family. FabZ subfamily.

It localises to the cytoplasm. It carries out the reaction a (3R)-hydroxyacyl-[ACP] = a (2E)-enoyl-[ACP] + H2O. Functionally, involved in unsaturated fatty acids biosynthesis. Catalyzes the dehydration of short chain beta-hydroxyacyl-ACPs and long chain saturated and unsaturated beta-hydroxyacyl-ACPs. This chain is 3-hydroxyacyl-[acyl-carrier-protein] dehydratase FabZ, found in Anaeromyxobacter dehalogenans (strain 2CP-C).